The sequence spans 68 residues: Ribosome modulation factor (68 aa).

The protein belongs to the ribosome modulation factor family.

The protein resides in the cytoplasm. In terms of biological role, during stationary phase, converts 70S ribosomes to an inactive dimeric form (100S ribosomes). This is Ribosome modulation factor from Saccharophagus degradans (strain 2-40 / ATCC 43961 / DSM 17024).